Reading from the N-terminus, the 359-residue chain is N-acetyl-gamma-glutamyl-phosphate reductase (359 aa).

Residue cysteine 162 is part of the active site.

It belongs to the NAGSA dehydrogenase family. Type 1 subfamily.

The protein resides in the cytoplasm. It carries out the reaction N-acetyl-L-glutamate 5-semialdehyde + phosphate + NADP(+) = N-acetyl-L-glutamyl 5-phosphate + NADPH + H(+). It functions in the pathway amino-acid biosynthesis; L-arginine biosynthesis; N(2)-acetyl-L-ornithine from L-glutamate: step 3/4. Functionally, catalyzes the NADPH-dependent reduction of N-acetyl-5-glutamyl phosphate to yield N-acetyl-L-glutamate 5-semialdehyde. The polypeptide is N-acetyl-gamma-glutamyl-phosphate reductase (Prochlorococcus marinus (strain SARG / CCMP1375 / SS120)).